The sequence spans 1409 residues: L-2-aminoadipate reductase large subunit (1409 aa).

One can recognise a Carrier domain in the interval 858-937; the sequence is QALSETEQTL…GFASEIDRLL (80 aa). S896 is subject to O-(pantetheine 4'-phosphoryl)serine.

It belongs to the ATP-dependent AMP-binding enzyme family. Heterodimer of an alpha and a beta subunit. Pantetheine 4'-phosphate is required as a cofactor.

It carries out the reaction (S)-2-amino-6-oxohexanoate + NADP(+) + H2O = L-2-aminoadipate + NADPH + 2 H(+). It catalyses the reaction (S)-2-amino-6-oxohexanoate + NAD(+) + H2O = L-2-aminoadipate + NADH + 2 H(+). The enzyme catalyses (S)-2-amino-6-oxohexanoate + AMP + diphosphate + NADP(+) = L-2-aminoadipate + ATP + NADPH + H(+). Its pathway is amino-acid biosynthesis; L-lysine biosynthesis via AAA pathway; L-lysine from L-alpha-aminoadipate (fungal route): step 1/3. In terms of biological role, catalyzes the activation of alpha-aminoadipate by ATP-dependent adenylation and the reduction of activated alpha-aminoadipate by NADPH. The activated alpha-aminoadipate is bound to the phosphopantheinyl group of the enzyme itself before it is reduced to (S)-2-amino-6-oxohexanoate. This is L-2-aminoadipate reductase large subunit (lys2) from Penicillium chrysogenum (Penicillium notatum).